The chain runs to 943 residues: Neutral alpha-glucosidase AB (943 aa).

Positions 1-23 are cleaved as a signal peptide; it reads MRKLVILIILSIVCSLFIGSIES. Residues 186–231 are disordered; it reads FEPISDKPQPLPPKEKKSEEENKEANQEEDNNNNNNDNNEEQQVST. Residues 198–211 are compositionally biased toward basic and acidic residues; sequence PKEKKSEEENKEAN. Asp540 acts as the Nucleophile in catalysis. Residue Glu543 is part of the active site. Asp617 serves as the catalytic Proton donor. N-linked (GlcNAc...) asparagine glycosylation is found at Asn878, Asn887, and Asn907.

The protein belongs to the glycosyl hydrolase 31 family.

It localises to the endoplasmic reticulum. The protein resides in the golgi apparatus. The enzyme catalyses N(4)-(alpha-D-Glc-(1-&gt;3)-alpha-D-Man-(1-&gt;2)-alpha-D-Man-(1-&gt;2)-alpha-D-Man-(1-&gt;3)-[alpha-D-Man-(1-&gt;2)-alpha-D-Man-(1-&gt;3)-[alpha-D-Man-(1-&gt;2)-alpha-D-Man-(1-&gt;6)]-alpha-D-Man-(1-&gt;6)]-beta-D-Man-(1-&gt;4)-beta-D-GlcNAc-(1-&gt;4)-beta-D-GlcNAc)-L-asparaginyl-[protein] + H2O = N(4)-(alpha-D-Man-(1-&gt;2)-alpha-D-Man-(1-&gt;2)-alpha-D-Man-(1-&gt;3)-[alpha-D-Man-(1-&gt;2)-alpha-D-Man-(1-&gt;3)-[alpha-D-Man-(1-&gt;2)-alpha-D-Man-(1-&gt;6)]-alpha-D-Man-(1-&gt;6)]-beta-D-Man-(1-&gt;4)-beta-D-GlcNAc-(1-&gt;4)-beta-D-GlcNAc)-L-asparaginyl-[protein] (N-glucan mannose isomer 9A1,2,3B1,2,3) + beta-D-glucose. It catalyses the reaction N(4)-(alpha-D-Glc-(1-&gt;3)-alpha-D-Glc-(1-&gt;3)-alpha-D-Man-(1-&gt;2)-alpha-D-Man-(1-&gt;2)-alpha-D-Man-(1-&gt;3)-[alpha-D-Man-(1-&gt;2)-alpha-D-Man-(1-&gt;3)-[alpha-D-Man-(1-&gt;2)-alpha-D-Man-(1-&gt;6)]-alpha-D-Man-(1-&gt;6)]-beta-D-Man-(1-&gt;4)-beta-D-GlcNAc-(1-&gt;4)-beta-D-GlcNAc)-L-asparaginyl-[protein] + H2O = N(4)-(alpha-D-Glc-(1-&gt;3)-alpha-D-Man-(1-&gt;2)-alpha-D-Man-(1-&gt;2)-alpha-D-Man-(1-&gt;3)-[alpha-D-Man-(1-&gt;2)-alpha-D-Man-(1-&gt;3)-[alpha-D-Man-(1-&gt;2)-alpha-D-Man-(1-&gt;6)]-alpha-D-Man-(1-&gt;6)]-beta-D-Man-(1-&gt;4)-beta-D-GlcNAc-(1-&gt;4)-beta-D-GlcNAc)-L-asparaginyl-[protein] + beta-D-glucose. It functions in the pathway glycan metabolism; N-glycan metabolism. Functionally, cleaves sequentially the 2 innermost alpha-1,3-linked glucose residues from N-linked oligosaccharides on newly synthesized glycoproteins. This is Neutral alpha-glucosidase AB (modA) from Dictyostelium discoideum (Social amoeba).